We begin with the raw amino-acid sequence, 348 residues long: Kinetochore-associated protein DSN1 homolog (348 aa).

The segment at 1–105 is disordered; it reads MTSVTRSEDQ…RASMKEVNRR (105 aa). A Phosphoserine modification is found at serine 25. Composition is skewed to polar residues over residues 33–46 and 70–86; these read PQSS…TQGV and GSQL…QSIR. Phosphoserine is present on residues serine 75 and serine 79. Over residues 87–104 the composition is skewed to basic and acidic residues; that stretch reads PQDRRQSWRRASMKEVNR. Phosphoserine is present on residues serine 107 and serine 123. Lysine 253 is covalently cross-linked (Glycyl lysine isopeptide (Lys-Gly) (interchain with G-Cter in SUMO2)). Residues 325–348 form a disordered region; sequence MDQLDSSPARKLLKLPLQSSPSTQ. At serine 331 the chain carries Phosphoserine. Over residues 338–348 the composition is skewed to low complexity; the sequence is KLPLQSSPSTQ.

In terms of assembly, component of the MIS12 complex composed of MIS12, DSN1, NSL1 and PMF1. Also interacts with KNL1, CBX3 and CBX5. Interacts with KNSTRN.

Its subcellular location is the nucleus. The protein localises to the chromosome. It localises to the centromere. It is found in the kinetochore. Part of the MIS12 complex which is required for normal chromosome alignment and segregation and kinetochore formation during mitosis. This chain is Kinetochore-associated protein DSN1 homolog (Dsn1), found in Mus musculus (Mouse).